The sequence spans 337 residues: Cytoskeleton protein RodZ (337 aa).

The Cytoplasmic segment spans residues 1–111 (MNTEATHDQN…LGKRRKKRDG (111 aa)). In terms of domain architecture, HTH cro/C1-type spans 19 to 71 (LRNAREQLGLSQQAVAERLCLKVSTVRDIEEDKAPADLASTFLRGYIRSYARL). The segment at residues 30–49 (QQAVAERLCLKVSTVRDIEE) is a DNA-binding region (H-T-H motif). The helical; Signal-anchor for type II membrane protein transmembrane segment at 112-132 (WLMTFTWLVLFVVIGLSGAWW) threads the bilayer. The Periplasmic portion of the chain corresponds to 133–337 (WQDHKAQQEE…TLNAEQSPAQ (205 aa)). Residues 145 to 167 (TMADQSSAELSSNSEQGQSVPLN) are compositionally biased toward polar residues. Residues 145-218 (TMADQSSAEL…AVVSPSQANV (74 aa)) form a disordered region. Low complexity predominate over residues 168-207 (TSTTTDPATTSTPPASVDTTATNTQTPAVTAPAPAVDPQQ). Residues 208-218 (NAVVSPSQANV) show a composition bias toward polar residues.

This sequence belongs to the RodZ family.

It localises to the cell inner membrane. Cytoskeletal protein that is involved in cell-shape control through regulation of the length of the long axis. The chain is Cytoskeleton protein RodZ from Shigella flexneri serotype 5b (strain 8401).